A 194-amino-acid chain; its full sequence is Putative manganese efflux pump MntP (194 aa).

6 helical membrane-spanning segments follow: residues 2–22 (TPGA…AAAV), 40–60 (FVFG…GLVA), 67–87 (VDHW…IWEA), 107–129 (ALIA…LAFI), 133–155 (IWVI…MLIG), and 168–188 (LIGG…HTGV).

This sequence belongs to the MntP (TC 9.B.29) family.

Its subcellular location is the cell inner membrane. Functionally, probably functions as a manganese efflux pump. This is Putative manganese efflux pump MntP from Rhodopseudomonas palustris (strain BisA53).